A 631-amino-acid chain; its full sequence is Phosphomethylpyrimidine synthase (631 aa).

Residues asparagine 239, methionine 268, tyrosine 297, histidine 333, 353-355, 394-397, and glutamate 433 contribute to the substrate site; these read SRG and DGLR. Histidine 437 contributes to the Zn(2+) binding site. Residue tyrosine 460 coordinates substrate. Histidine 501 contacts Zn(2+). 3 residues coordinate [4Fe-4S] cluster: cysteine 581, cysteine 584, and cysteine 589.

Belongs to the ThiC family. In terms of assembly, homodimer. Requires [4Fe-4S] cluster as cofactor.

It catalyses the reaction 5-amino-1-(5-phospho-beta-D-ribosyl)imidazole + S-adenosyl-L-methionine = 4-amino-2-methyl-5-(phosphooxymethyl)pyrimidine + CO + 5'-deoxyadenosine + formate + L-methionine + 3 H(+). It participates in cofactor biosynthesis; thiamine diphosphate biosynthesis. In terms of biological role, catalyzes the synthesis of the hydroxymethylpyrimidine phosphate (HMP-P) moiety of thiamine from aminoimidazole ribotide (AIR) in a radical S-adenosyl-L-methionine (SAM)-dependent reaction. The sequence is that of Phosphomethylpyrimidine synthase from Escherichia coli O127:H6 (strain E2348/69 / EPEC).